Reading from the N-terminus, the 161-residue chain is Large ribosomal subunit protein uL15 (161 aa).

The interval 1 to 47 is disordered; it reads MKLHELHDNPGANRKKKRVARGPGSGKGKTAGRGIKGQTSRSGVALN. Residues 23-35 are compositionally biased toward gly residues; the sequence is PGSGKGKTAGRGI.

It belongs to the universal ribosomal protein uL15 family. Part of the 50S ribosomal subunit.

Binds to the 23S rRNA. The chain is Large ribosomal subunit protein uL15 from Paracoccus denitrificans (strain Pd 1222).